A 650-amino-acid chain; its full sequence is Phosphatidylinositol 4-kinase gamma 7 (650 aa).

The 58-residue stretch at 46 to 103 (RRVFVQTETGCVLGMELDRSDNVHTVKRRLQIALNFPTEESSLTYGDMVLTNDLSAVR) folds into the Ubiquitin-like; degenerate domain. A PI3K/PI4K catalytic domain is found at 166-463 (GVEPLPVHSG…SVTERDVFSP (298 aa)). The G-loop stretch occupies residues 172–178 (VHSGLGG). Residues 173 to 179 (HSGLGGA), Lys-194, and 283 to 286 (QKFV) each bind ATP. Positions 316–324 (FNTDRHGGN) are catalytic loop. Positions 343-369 (PIDHGLCLPETLEDPYFEWIHWPQASL) are activation loop. Asp-345 is an ATP binding site. Disordered regions lie at residues 508 to 534 (SLGKLEESIKEEEEDEEEEEDKTENTV) and 560 to 595 (STSMKNTHLSDTTRKNPKPLTRGKSENTSSGHKSAN). Residues 516–529 (IKEEEEDEEEEEDK) are compositionally biased toward acidic residues. Composition is skewed to polar residues over residues 560-569 (STSMKNTHLS) and 585-595 (ENTSSGHKSAN). At Ser-593 the chain carries Phosphoserine.

The protein belongs to the PI3/PI4-kinase family. Type II PI4K subfamily.

It catalyses the reaction a 1,2-diacyl-sn-glycero-3-phospho-(1D-myo-inositol) + ATP = a 1,2-diacyl-sn-glycero-3-phospho-(1D-myo-inositol 4-phosphate) + ADP + H(+). The phosphorylation of phosphatidylinositol (PI) to PI4P is the first committed step in the generation of phosphatidylinositol 4,5-bisphosphate (PIP2), a precursor of the second messenger inositol 1,4,5-trisphosphate (InsP3). Undergoes autophosphorylation and phosphorylates serine/threonine residues of protein substrates. The polypeptide is Phosphatidylinositol 4-kinase gamma 7 (Arabidopsis thaliana (Mouse-ear cress)).